The sequence spans 345 residues: Inositol 2-dehydrogenase (345 aa).

It belongs to the Gfo/Idh/MocA family. As to quaternary structure, homotetramer.

The enzyme catalyses myo-inositol + NAD(+) = scyllo-inosose + NADH + H(+). Involved in the oxidation of myo-inositol (MI) to 2-keto-myo-inositol (2KMI or 2-inosose). The chain is Inositol 2-dehydrogenase from Mycolicibacterium smegmatis (strain ATCC 700084 / mc(2)155) (Mycobacterium smegmatis).